The chain runs to 444 residues: Methionine aminopeptidase 2-1 (444 aa).

The interval 1 to 92 is disordered; that stretch reads MAAQVTEKLQ…VPVSNLFPNN (92 aa). The segment covering 15 to 29 has biased composition (polar residues); sequence NGQNGDAKANSTAVG. Positions 34–45 are enriched in acidic residues; sequence GEAEDDSDDEKE. Positions 59–73 are enriched in basic residues; sequence AKKKKRKSKKKKKGG. His-197 is a substrate binding site. Asp-217, Asp-228, and His-297 together coordinate a divalent metal cation. His-305 serves as a coordination point for substrate. Residues Glu-330 and Glu-425 each contribute to the a divalent metal cation site.

The protein belongs to the peptidase M24A family. Methionine aminopeptidase eukaryotic type 2 subfamily. The cofactor is Co(2+). It depends on Zn(2+) as a cofactor. Mn(2+) is required as a cofactor. Requires Fe(2+) as cofactor.

The protein localises to the cytoplasm. The enzyme catalyses Release of N-terminal amino acids, preferentially methionine, from peptides and arylamides.. Cotranslationally removes the N-terminal methionine from nascent proteins. The N-terminal methionine is often cleaved when the second residue in the primary sequence is small and uncharged (Met-Ala-, Cys, Gly, Pro, Ser, Thr, or Val). This chain is Methionine aminopeptidase 2-1, found in Neosartorya fischeri (strain ATCC 1020 / DSM 3700 / CBS 544.65 / FGSC A1164 / JCM 1740 / NRRL 181 / WB 181) (Aspergillus fischerianus).